A 453-amino-acid polypeptide reads, in one-letter code: Venom prothrombin activator notecarin-D2 (453 aa).

The signal sequence occupies residues 1–20 (MAPQLLLCLILTFLWSLPEA). A propeptide spanning residues 21–40 (ESNVFLKSKVANRFLQRTKR) is cleaved from the precursor. A Gla domain is found at 41-86 (SNSLFEEIRPGNIERECIEEKCSKEEAREVFEDNEKTETFWNVYVD). A 4-carboxyglutamate mark is found at glutamate 46, glutamate 47, glutamate 54, glutamate 56, glutamate 59, glutamate 60, glutamate 65, glutamate 66, glutamate 69, glutamate 72, and glutamate 75. Residues cysteine 57 and cysteine 62 are joined by a disulfide bond. In terms of domain architecture, EGF-like 1; calcium-binding spans 86–122 (DGDQCSSNPCHYRGTCKDGIGSYTCTCLPNYEGKNCE). 11 disulfide bridges follow: cysteine 90–cysteine 101, cysteine 95–cysteine 110, cysteine 112–cysteine 121, cysteine 129–cysteine 140, cysteine 136–cysteine 149, cysteine 151–cysteine 164, cysteine 172–cysteine 326, cysteine 216–cysteine 221, cysteine 236–cysteine 252, cysteine 374–cysteine 388, and cysteine 399–cysteine 427. Serine 92 is a glycosylation site (O-linked (Hex...) serine). In terms of domain architecture, EGF-like 2 spans 129 to 164 (CRAFNGNCWHFCKRVQSETQCSCAESYLLGVDGHSC). A propeptide spans 182–209 (REASLPDFVQSQKATVLKKSDNPSPDIR) (activation peptide). A Peptidase S1 domain is found at 210 to 451 (IVNGMDCKLG…FIPWIKKIMS (242 aa)). The active-site Charge relay system is the histidine 251. Residue asparagine 254 is glycosylated (N-linked (GlcNAc...) asparagine). Residue aspartate 306 is the Charge relay system of the active site. The Charge relay system role is filled by serine 403.

Belongs to the peptidase S1 family. Snake venom subfamily. In terms of assembly, heterodimer of a light chain and a heavy chain; disulfide-linked. Gamma-carboxyglutamate residues are formed by vitamin K dependent carboxylation. These residues are essential for the binding of calcium. Expressed by the venom gland.

The protein resides in the secreted. It catalyses the reaction Selective cleavage of Arg-|-Thr and then Arg-|-Ile bonds in prothrombin to form thrombin.. Functionally, snake prothrombin activator that attacks the hemostatic system of prey. This protein is functionally similar to blood coagulation factor Xa. This chain is Venom prothrombin activator notecarin-D2, found in Notechis scutatus scutatus (Mainland tiger snake).